Reading from the N-terminus, the 216-residue chain is Probable GTP-binding protein EngB (216 aa).

The EngB-type G domain maps to 30–204 (DGLEVAFAGR…HDVLARWLGL (175 aa)). GTP is bound by residues 38 to 45 (GRSNAGKS), 64 to 68 (GRTQL), 82 to 85 (DLPG), 149 to 152 (TKAD), and 182 to 185 (LFSA). 2 residues coordinate Mg(2+): serine 45 and threonine 66.

It belongs to the TRAFAC class TrmE-Era-EngA-EngB-Septin-like GTPase superfamily. EngB GTPase family. The cofactor is Mg(2+).

In terms of biological role, necessary for normal cell division and for the maintenance of normal septation. The polypeptide is Probable GTP-binding protein EngB (Azotobacter vinelandii (strain DJ / ATCC BAA-1303)).